The sequence spans 319 residues: Urease accessory protein UreD (319 aa).

The interval 284–319 (RLSTPQPPREWPLQEEGTFSNERFTKDHQSPSASPH) is disordered.

It belongs to the UreD family. UreD, UreF and UreG form a complex that acts as a GTP-hydrolysis-dependent molecular chaperone, activating the urease apoprotein by helping to assemble the nickel containing metallocenter of UreC. The UreE protein probably delivers the nickel.

The protein localises to the cytoplasm. In terms of biological role, required for maturation of urease via the functional incorporation of the urease nickel metallocenter. The protein is Urease accessory protein UreD of Prochlorococcus marinus (strain MIT 9313).